A 176-amino-acid chain; its full sequence is Inorganic pyrophosphatase (176 aa).

Lysine 30, arginine 44, and tyrosine 56 together coordinate substrate. Aspartate 66, aspartate 71, and aspartate 103 together coordinate Mg(2+). Tyrosine 142 is a binding site for substrate.

Belongs to the PPase family. As to quaternary structure, homohexamer. Requires Mg(2+) as cofactor.

It localises to the cytoplasm. The catalysed reaction is diphosphate + H2O = 2 phosphate + H(+). In terms of biological role, catalyzes the hydrolysis of inorganic pyrophosphate (PPi) forming two phosphate ions. The chain is Inorganic pyrophosphatase from Escherichia coli O6:H1 (strain CFT073 / ATCC 700928 / UPEC).